We begin with the raw amino-acid sequence, 135 residues long: Rheacalcin-1 (135 aa).

3 disulfides stabilise this stretch: cysteine 6–cysteine 17, cysteine 34–cysteine 131, and cysteine 106–cysteine 123. The C-type lectin domain maps to 13–132; sequence FRGNCYGYFR…CSERNAFICK (120 aa).

The protein localises to the secreted. The protein resides in the extracellular space. It localises to the extracellular matrix. The protein is Rheacalcin-1 of Rhea americana (Greater rhea).